A 379-amino-acid chain; its full sequence is Queuine tRNA-ribosyltransferase (379 aa).

Residue D95 is the Proton acceptor of the active site. Substrate-binding positions include 95–99 (DSGGF), D149, Q197, and G224. The segment at 255–261 (GVGMPAE) is RNA binding. Residue D274 is the Nucleophile of the active site. Residues C312, C314, C317, and H343 each contribute to the Zn(2+) site.

It belongs to the queuine tRNA-ribosyltransferase family. In terms of assembly, homodimer. Within each dimer, one monomer is responsible for RNA recognition and catalysis, while the other monomer binds to the replacement base PreQ1. Requires Zn(2+) as cofactor.

The enzyme catalyses 7-aminomethyl-7-carbaguanine + guanosine(34) in tRNA = 7-aminomethyl-7-carbaguanosine(34) in tRNA + guanine. It functions in the pathway tRNA modification; tRNA-queuosine biosynthesis. Functionally, catalyzes the base-exchange of a guanine (G) residue with the queuine precursor 7-aminomethyl-7-deazaguanine (PreQ1) at position 34 (anticodon wobble position) in tRNAs with GU(N) anticodons (tRNA-Asp, -Asn, -His and -Tyr). Catalysis occurs through a double-displacement mechanism. The nucleophile active site attacks the C1' of nucleotide 34 to detach the guanine base from the RNA, forming a covalent enzyme-RNA intermediate. The proton acceptor active site deprotonates the incoming PreQ1, allowing a nucleophilic attack on the C1' of the ribose to form the product. After dissociation, two additional enzymatic reactions on the tRNA convert PreQ1 to queuine (Q), resulting in the hypermodified nucleoside queuosine (7-(((4,5-cis-dihydroxy-2-cyclopenten-1-yl)amino)methyl)-7-deazaguanosine). The polypeptide is Queuine tRNA-ribosyltransferase (Solibacter usitatus (strain Ellin6076)).